Reading from the N-terminus, the 205-residue chain is ATP synthase subunit b (205 aa).

Residues 45–65 (LGMTATAWVSLAMVIVILLLL) form a helical membrane-spanning segment.

Belongs to the ATPase B chain family. F-type ATPases have 2 components, F(1) - the catalytic core - and F(0) - the membrane proton channel. F(1) has five subunits: alpha(3), beta(3), gamma(1), delta(1), epsilon(1). F(0) has three main subunits: a(1), b(2) and c(10-14). The alpha and beta chains form an alternating ring which encloses part of the gamma chain. F(1) is attached to F(0) by a central stalk formed by the gamma and epsilon chains, while a peripheral stalk is formed by the delta and b chains.

It localises to the cell inner membrane. Functionally, f(1)F(0) ATP synthase produces ATP from ADP in the presence of a proton or sodium gradient. F-type ATPases consist of two structural domains, F(1) containing the extramembraneous catalytic core and F(0) containing the membrane proton channel, linked together by a central stalk and a peripheral stalk. During catalysis, ATP synthesis in the catalytic domain of F(1) is coupled via a rotary mechanism of the central stalk subunits to proton translocation. Its function is as follows. Component of the F(0) channel, it forms part of the peripheral stalk, linking F(1) to F(0). The chain is ATP synthase subunit b from Rhizorhabdus wittichii (strain DSM 6014 / CCUG 31198 / JCM 15750 / NBRC 105917 / EY 4224 / RW1) (Sphingomonas wittichii).